The sequence spans 130 residues: Small ribosomal subunit protein uS11c (130 aa).

Belongs to the universal ribosomal protein uS11 family. As to quaternary structure, part of the 30S ribosomal subunit.

It localises to the plastid. It is found in the chloroplast. This Tetradesmus obliquus (Green alga) protein is Small ribosomal subunit protein uS11c.